The primary structure comprises 287 residues: Large ribosomal subunit protein uL2 (287 aa).

The disordered stretch occupies residues 221 to 287 (RGSVMNPCDH…SKRSRGGRDS (67 aa)). Residues 258–287 (KTRKRNKPSNRFVLRKRRRTSKRSRGGRDS) are compositionally biased toward basic residues.

Belongs to the universal ribosomal protein uL2 family. As to quaternary structure, part of the 50S ribosomal subunit. Forms a bridge to the 30S subunit in the 70S ribosome.

In terms of biological role, one of the primary rRNA binding proteins. Required for association of the 30S and 50S subunits to form the 70S ribosome, for tRNA binding and peptide bond formation. It has been suggested to have peptidyltransferase activity; this is somewhat controversial. Makes several contacts with the 16S rRNA in the 70S ribosome. The protein is Large ribosomal subunit protein uL2 of Prochlorococcus marinus (strain MIT 9313).